A 275-amino-acid chain; its full sequence is Large ribosomal subunit protein uL2 (275 aa).

The interval 208 to 275 is disordered; it reads AGAKRWRGRR…NMIIRDRRKK (68 aa). Composition is skewed to basic residues over residues 209-219 and 254-263; these read GAKRWRGRRPT and KGYKTRRNKR.

Belongs to the universal ribosomal protein uL2 family. Part of the 50S ribosomal subunit. Forms a bridge to the 30S subunit in the 70S ribosome.

In terms of biological role, one of the primary rRNA binding proteins. Required for association of the 30S and 50S subunits to form the 70S ribosome, for tRNA binding and peptide bond formation. It has been suggested to have peptidyltransferase activity; this is somewhat controversial. Makes several contacts with the 16S rRNA in the 70S ribosome. The protein is Large ribosomal subunit protein uL2 of Coxiella burnetii (strain CbuG_Q212) (Coxiella burnetii (strain Q212)).